The following is a 217-amino-acid chain: Small ribosomal subunit protein uS3 (217 aa).

Residues 40–110 (IRDLINKWFN…EVYINIHEVR (71 aa)) enclose the KH type-2 domain.

The protein belongs to the universal ribosomal protein uS3 family. As to quaternary structure, part of the 30S ribosomal subunit. Forms a tight complex with proteins S10 and S14.

Binds the lower part of the 30S subunit head. Binds mRNA in the 70S ribosome, positioning it for translation. In Rickettsia typhi (strain ATCC VR-144 / Wilmington), this protein is Small ribosomal subunit protein uS3.